The chain runs to 952 residues: MEKTYNPTSIEQALYQTWEEKGYFKPHGDTTKESYSIMIPPPNVTGSLHMGHAFQDTIMDTLIRCERMKGKNTLWQVGTDHAGIATQMVVERKIAAEEGKTKHDYGRDAFIDKIWEWKGESGGTITKQLRRLGASVDWDRERFTMDDGLSNAVQEVFVRLYEDDLIYRGKRLVNWDPKLHTAISDLEVENKDTKGHMWHFRYPLADGVKTADGKDYIVVATTRPETMLGDTGVAVNPEDPRYKDLIGKEIILPIVDRRIPIVGDEHADMEKGTGCVKITPAHDFNDYEVGKRHQLPMINILTFDANIRGAAEVFNTNGEPSDAYSTELPAKYHGMERFAARKAIVAEFDELGLLEEVKDHDLQVPYGDRGGVVIEPMLTDQWYVRTAPLAKTAVEAVENGDIQFVPKQYENMYFSWMRDVQDWCISRQLWWGHRIPAWYDNQGNVYVGRTEEEVRKNNNLESVIELHQDEDVLDTWFSSALWTFGTQGWPEQTDDLKVFHPSDVLVTGFDIIFFWVARMIMMTMHFVKDENGKPQVPFKTVYVTGLIRDENGDKMSKSKGNVLDPIDMIDGIDLESLVEKRTGNMMQPQLAKKIEKNTRKTFENGIEAYGTDALRFTLAAMASTGRDINWDMKRLEGYRNFCNKLWNASRYVMMNTEEQDCGFNGGEIEYSLADKWIESQFELAAKAFNNHIDNFRLDMASNTLYEFIWNQFCDWYLELTKPVLWKGTEAQQRGTRRTLITVLEKTLRLAHPVIPYITETIWQSIKPLVEGVEGETIMLQALPQFDEANFNQEALDDIEWVKAFITSIRNLRAEYDINPGKPLDVMLKAANAEDAARLEANKQVLMSLAKLESVRVLAADEETPACATALVAKSELMIPMAGLIDKDAELARLDGEIKKTHGEIKRIEGKLGNEGFVAKAPEAVVAKEREKLEGYKETLAKLEEQKKTIAAL.

A 'HIGH' region motif is present at residues 42–52; the sequence is PNVTGSLHMGH. Positions 554-558 match the 'KMSKS' region motif; it reads KMSKS. Residue K557 participates in ATP binding. Positions 888–952 form a coiled coil; that stretch reads AELARLDGEI…EEQKKTIAAL (65 aa).

This sequence belongs to the class-I aminoacyl-tRNA synthetase family. ValS type 1 subfamily. Monomer.

It localises to the cytoplasm. It catalyses the reaction tRNA(Val) + L-valine + ATP = L-valyl-tRNA(Val) + AMP + diphosphate. Its function is as follows. Catalyzes the attachment of valine to tRNA(Val). As ValRS can inadvertently accommodate and process structurally similar amino acids such as threonine, to avoid such errors, it has a 'posttransfer' editing activity that hydrolyzes mischarged Thr-tRNA(Val) in a tRNA-dependent manner. The protein is Valine--tRNA ligase of Vibrio parahaemolyticus serotype O3:K6 (strain RIMD 2210633).